We begin with the raw amino-acid sequence, 689 residues long: Glycine--tRNA ligase beta subunit (689 aa).

Belongs to the class-II aminoacyl-tRNA synthetase family. As to quaternary structure, tetramer of two alpha and two beta subunits.

It localises to the cytoplasm. The enzyme catalyses tRNA(Gly) + glycine + ATP = glycyl-tRNA(Gly) + AMP + diphosphate. The sequence is that of Glycine--tRNA ligase beta subunit from Lacticaseibacillus casei (strain BL23) (Lactobacillus casei).